The chain runs to 314 residues: tRNA uridine(34) hydroxylase (314 aa).

Positions 140–234 constitute a Rhodanese domain; the sequence is SRDDVILVDT…YLEETPAEES (95 aa). The active-site Cysteine persulfide intermediate is Cys194.

It belongs to the TrhO family.

The catalysed reaction is uridine(34) in tRNA + AH2 + O2 = 5-hydroxyuridine(34) in tRNA + A + H2O. In terms of biological role, catalyzes oxygen-dependent 5-hydroxyuridine (ho5U) modification at position 34 in tRNAs. This chain is tRNA uridine(34) hydroxylase, found in Acinetobacter baylyi (strain ATCC 33305 / BD413 / ADP1).